The primary structure comprises 366 residues: CRS2-associated factor 2, mitochondrial (366 aa).

The N-terminal 14 residues, 1–14 (MLLPRDLLLLPWRR), are a transit peptide targeting the mitochondrion. A disordered region spans residues 24-82 (RRLNHHRAPPFSDPDDDPPFTRLAERPPRAPSKKKKKEEEDQGGRIRPPEPASSDLPFD). Residues 60 to 71 (KEEEDQGGRIRP) show a composition bias toward basic and acidic residues. 2 CRM domains span residues 143 to 241 (EPLA…QRPQ) and 263 to 359 (DGLT…SVSL).

As to quaternary structure, part of large ribonucleo-protein complexes that include group IIB introns.

The protein localises to the mitochondrion. May be involved in the splicing of group IIB introns in mitochondria. The protein is CRS2-associated factor 2, mitochondrial of Oryza sativa subsp. japonica (Rice).